The chain runs to 288 residues: Chitinase 5 (288 aa).

Positions 1-29 (MANSPTPTMLAFLALGLALLLSATGQASA) are cleaved as a signal peptide. The Chitin-binding type-1 domain maps to 30 to 64 (QNCGCQSNMCCSKWGYCGTGKDYCGDGCRSGPCYG). 7 disulfides stabilise this stretch: Cys-32–Cys-40, Cys-34–Cys-46, Cys-39–Cys-53, Cys-57–Cys-62, Cys-107–Cys-156, Cys-169–Cys-178, and Cys-256–Cys-288. The active-site Proton donor is the Glu-151.

This sequence belongs to the glycosyl hydrolase 19 family. Chitinase class IV subfamily. In terms of tissue distribution, expressed in sheaths and meristems and at lower levels in roots and leaves.

It catalyses the reaction Random endo-hydrolysis of N-acetyl-beta-D-glucosaminide (1-&gt;4)-beta-linkages in chitin and chitodextrins.. May function in reproductive organs during embryogenesis and seed maturation. This Oryza sativa subsp. japonica (Rice) protein is Chitinase 5 (Cht5).